Here is a 274-residue protein sequence, read N- to C-terminus: uncharacterized protein (274 aa).

The signal sequence occupies residues 1 to 21 (MRKLTLLPLLLIITGLLTVQA). Residues 249 to 266 (TSAFVILTASALIFIYLF) traverse the membrane as a helical segment.

The protein localises to the membrane. This is an uncharacterized protein from Archaeoglobus fulgidus (strain ATCC 49558 / DSM 4304 / JCM 9628 / NBRC 100126 / VC-16).